Here is a 310-residue protein sequence, read N- to C-terminus: Mitochondrial thiamine pyrophosphate carrier 1 (310 aa).

The next 6 helical transmembrane spans lie at 16–32 (VSPY…GGVA), 88–104 (ILYV…YSAL), 117–141 (IVMP…LTTY), 173–197 (GISG…LMFW), 218–234 (ICGF…TFPL), and 274–291 (GYGV…ISLW). 3 Solcar repeats span residues 16 to 107 (VSPY…LSKS), 120 to 205 (PSSV…AREF), and 211 to 299 (HVPF…VISA).

The protein belongs to the mitochondrial carrier (TC 2.A.29) family.

It is found in the mitochondrion inner membrane. Functionally, mitochondrial transporter that mediates uptake of thiamine pyrophosphate (ThPP) into mitochondria. This Lodderomyces elongisporus (strain ATCC 11503 / CBS 2605 / JCM 1781 / NBRC 1676 / NRRL YB-4239) (Yeast) protein is Mitochondrial thiamine pyrophosphate carrier 1 (TPC1).